A 341-amino-acid polypeptide reads, in one-letter code: Acetylpolyamine amidohydrolase (341 aa).

Residues Tyr-19, Glu-106, and Glu-117 each coordinate substrate. Residue His-159 is the Proton donor/acceptor of the active site. Zn(2+)-binding residues include Asp-195, His-197, and Asp-284. Residue Tyr-323 coordinates substrate.

It belongs to the histone deacetylase family. As to quaternary structure, homodimer. Requires Zn(2+) as cofactor.

The enzyme catalyses N-acetylputrescine + H2O = putrescine + acetate. The catalysed reaction is N-acetylcadaverine + H2O = cadaverine + acetate. It catalyses the reaction N(1)-acetylspermine + H2O = spermine + acetate. It carries out the reaction N(1)-acetylspermidine + H2O = spermidine + acetate. The enzyme catalyses N(8)-acetylspermidine + H2O = spermidine + acetate. It participates in amine and polyamine metabolism. Zinc ions inhibit enzyme activity in a dose-dependent manner. Inhibited by KCl at concentrations above 10 mM. Inhibited by o-oxyquinoline in vitro, suggesting that it is a metalloprotein. Inhibited by various substrate N(8)-acetylspermidine analogs bearing different metal-binding groups such as trifluoromethylketone, thiol, or hydroxamate, and by hydroxamate analogs of short-chain acetyldiamines. In terms of biological role, involved in polyamine metabolism. Catalyzes the deacetylation of various acetylated polyamines such as N-acetylputrescine, N-acetylcadaverine, N(1)-acetylspermine, N(1)-acetylspermidine and N(8)-acetylspermidine. In vitro, is also able to deacetylate L-Lys(epsilon-acetyl)coumarin, but has very low activity towards the larger tetrapeptide N-acetyl-L-Arg-L-His-L-Lys(epsilon-acetyl)-L-Lys(epsilon-acetyl)coumarin. This chain is Acetylpolyamine amidohydrolase, found in Mycoplana ramosa (Mycoplana bullata).